Here is a 4490-residue protein sequence, read N- to C-terminus: Dynein axonemal heavy chain 8 (4490 aa).

Ser-674 carries the phosphoserine modification. 4 AAA regions span residues 1808-2030 (YQNE…VLRT), 2090-2309 (NAVA…KLNL), 2416-2669 (YYPT…IWQG), and 2780-3034 (QFNE…YRRR). ATP-binding positions include 1846 to 1853 (GPAGTGKT) and 2128 to 2135 (GPSGSGKT). Positions 3049 to 3346 (YKNIYAEKVK…MDLLNDADTC (298 aa)) are stalk. Coiled coils occupy residues 3072–3164 (DKLM…ALNT), 3290–3354 (LKAN…QAAS), and 3594–3630 (RRVI…DNLL). AAA stretches follow at residues 3432 to 3662 (LVDP…EVSE) and 3877 to 4091 (ARKY…FIQN).

It belongs to the dynein heavy chain family. In terms of assembly, consists of at least two heavy chains and a number of intermediate and light chains. In terms of tissue distribution, expressed in spermatozoa (at protein level). Not detected in airway epithelial cells (at protein level).

The protein localises to the cytoplasm. The protein resides in the cytoskeleton. Its subcellular location is the flagellum axoneme. Functionally, force generating protein component of the outer dynein arms (ODAs) in the sperm flagellum. Produces force towards the minus ends of microtubules. Dynein has ATPase activity; the force-producing power stroke is thought to occur on release of ADP. Involved in sperm motility; implicated in sperm flagellar assembly. The sequence is that of Dynein axonemal heavy chain 8 from Homo sapiens (Human).